Reading from the N-terminus, the 232-residue chain is Urease accessory protein UreF (232 aa).

This sequence belongs to the UreF family. In terms of assembly, ureD, UreF and UreG form a complex that acts as a GTP-hydrolysis-dependent molecular chaperone, activating the urease apoprotein by helping to assemble the nickel containing metallocenter of UreC. The UreE protein probably delivers the nickel.

It localises to the cytoplasm. Its function is as follows. Required for maturation of urease via the functional incorporation of the urease nickel metallocenter. The chain is Urease accessory protein UreF from Azorhizobium caulinodans (strain ATCC 43989 / DSM 5975 / JCM 20966 / LMG 6465 / NBRC 14845 / NCIMB 13405 / ORS 571).